A 105-amino-acid polypeptide reads, in one-letter code: Probable tetrachloroethene reductive dehalogenase membrane anchor protein (105 aa).

3 helical membrane passes run 3 to 23, 35 to 55, and 66 to 86; these read IYDV…QYGI, IPLQ…LAWG, and AIGM…IITY.

This sequence belongs to the PceB family.

The protein resides in the cell membrane. May act as a membrane anchor for the tetrachloroethene reductive dehalogenase PceA. This Dehalobacter restrictus (strain DSM 9455 / PER-K23) protein is Probable tetrachloroethene reductive dehalogenase membrane anchor protein.